The primary structure comprises 671 residues: MEPIEQQLTELRTTLRHHEYLYHVMDAPEVPDAEYDRLMRELRELESQHPELITPDSPTQRVGAAPLTAFSQIRHEVPMLSLDNVFDEESFLAFNKRVQDRLKSTDDLTYCCELKLDGLAVSILYENGVLMQAATRGDGTTGEDITSNVRTIRTIPLKLHGENIPARLEVRGEVFLPQAGFEKINEEARRTGGKVFANPRNAAAGSLRQLDPRITAKRPLTFFCYGVGVLEGGELPASHSARLQQFKAWGLPVSDRVTLCHTPEEVLTYYRKVEEDRPHLGFDIDGVVIKVDSLALQEQLGFVARAPRWAVAFKFPAQEQMTFVRDVEFQVGRTGAITPVARLEPVHVAGVLVSNATLHNADEIERLGLKIGDKVVIRRAGDVIPQVVNVVLSERPADARDVVFPTHCPVCQSDVERVEGEAVARCTGGLICGAQRKESLKHFVSRRALDVDGMGDKIIDQLVEKEYVHTPADLFRLSAGKLTGLDRMGPKSAQNVVNALEKAKETTFARFLYALGIREVGEATAAALAAHFGTLEALEQASIEELQKVPDVGIVVATHTFNFFAEESNRDVIAQLLAEGVHWPAPVVVKAEEIDSPFAGKTVVLTGSLSQLSRDDAKARLVALGAKVAGSVSKKTDLVIAGEAAGSKLAKAQELGIEVIDEAEMMRLLGE.

Residues 32–36, 81–82, and Glu113 contribute to the NAD(+) site; these read DAEYD and SL. The active-site N6-AMP-lysine intermediate is the Lys115. NAD(+)-binding residues include Arg136, Glu173, Lys290, and Lys314. Residues Cys408, Cys411, Cys426, and Cys432 each contribute to the Zn(2+) site. The region spanning 593–671 is the BRCT domain; it reads EIDSPFAGKT…EAEMMRLLGE (79 aa).

It belongs to the NAD-dependent DNA ligase family. LigA subfamily. It depends on Mg(2+) as a cofactor. Mn(2+) serves as cofactor.

It catalyses the reaction NAD(+) + (deoxyribonucleotide)n-3'-hydroxyl + 5'-phospho-(deoxyribonucleotide)m = (deoxyribonucleotide)n+m + AMP + beta-nicotinamide D-nucleotide.. Functionally, DNA ligase that catalyzes the formation of phosphodiester linkages between 5'-phosphoryl and 3'-hydroxyl groups in double-stranded DNA using NAD as a coenzyme and as the energy source for the reaction. It is essential for DNA replication and repair of damaged DNA. The protein is DNA ligase of Klebsiella pneumoniae (strain 342).